The chain runs to 261 residues: 1-(5-phosphoribosyl)-5-[(5-phosphoribosylamino)methylideneamino] imidazole-4-carboxamide isomerase (261 aa).

Aspartate 8 acts as the Proton acceptor in catalysis. Aspartate 139 serves as the catalytic Proton donor.

Belongs to the HisA/HisF family.

It is found in the cytoplasm. The catalysed reaction is 1-(5-phospho-beta-D-ribosyl)-5-[(5-phospho-beta-D-ribosylamino)methylideneamino]imidazole-4-carboxamide = 5-[(5-phospho-1-deoxy-D-ribulos-1-ylimino)methylamino]-1-(5-phospho-beta-D-ribosyl)imidazole-4-carboxamide. Its pathway is amino-acid biosynthesis; L-histidine biosynthesis; L-histidine from 5-phospho-alpha-D-ribose 1-diphosphate: step 4/9. In Janthinobacterium sp. (strain Marseille) (Minibacterium massiliensis), this protein is 1-(5-phosphoribosyl)-5-[(5-phosphoribosylamino)methylideneamino] imidazole-4-carboxamide isomerase.